A 342-amino-acid chain; its full sequence is GTPase Obg (342 aa).

Residues 1 to 159 (MQFIDQAQIE…KLLRLELKLL (159 aa)) enclose the Obg domain. The 171-residue stretch at 160–330 (AEVGIIGLPN…MLQEVWGILD (171 aa)) folds into the OBG-type G domain. GTP contacts are provided by residues 166–173 (GLPNAGKS), 191–195 (FTTLI), 213–216 (DIPG), 280–283 (NKID), and 311–313 (SAV). Mg(2+)-binding residues include serine 173 and threonine 193.

This sequence belongs to the TRAFAC class OBG-HflX-like GTPase superfamily. OBG GTPase family. As to quaternary structure, monomer. Requires Mg(2+) as cofactor.

It is found in the cytoplasm. In terms of biological role, an essential GTPase which binds GTP, GDP and possibly (p)ppGpp with moderate affinity, with high nucleotide exchange rates and a fairly low GTP hydrolysis rate. Plays a role in control of the cell cycle, stress response, ribosome biogenesis and in those bacteria that undergo differentiation, in morphogenesis control. This Nostoc sp. (strain PCC 7120 / SAG 25.82 / UTEX 2576) protein is GTPase Obg.